We begin with the raw amino-acid sequence, 373 residues long: Putative gustatory receptor 10b (373 aa).

Residues 1 to 8 (MRVGKLCR) lie on the Cytoplasmic side of the membrane. A helical membrane pass occupies residues 9-29 (LALRFWMGLILVLGFSSHYYN). The Extracellular portion of the chain corresponds to 30–82 (PTRRRLVYSRILQTYDWLLMVINLGAFYLYYRYAMTYFLEGMFRRQGFVNQVS). The chain crosses the membrane as a helical span at residues 83–103 (TCNVFQQLLMAVTGTWLHFLF). Over 104-132 (ERHVCQTYNELSRILKHDLKLKEHSRFYC) the chain is Cytoplasmic. A helical membrane pass occupies residues 133 to 153 (LAFLAKVYNFFHNFNFALSAI). The Extracellular portion of the chain corresponds to 154-170 (MHWGLRPFNVWDLLANL). A helical transmembrane segment spans residues 171–191 (YFVYNSLARDAILVAYVLLLL). The Cytoplasmic portion of the chain corresponds to 192-230 (NLSEALRLNGQQEHDTYSDLMKQLRRRERLLRIGRRVHR). The helical transmembrane segment at 231 to 251 (MFAWLVAIALIYLVFFNTATI) threads the bilayer. The Extracellular portion of the chain corresponds to 252-273 (YLGYTMFIQKHDALGLRGRGLK). Residues 274-294 (MLLTVVSFLVILWDVVLLQVI) traverse the membrane as a helical segment. The Cytoplasmic portion of the chain corresponds to 295–350 (CEKLLAEENKICDCPEDVASSRTTYRQWEMSALRRAITRSSPENNVLGMFRMDMRC). A helical transmembrane segment spans residues 351–371 (AFALISCSLSYGIIIIQIGYI). The Extracellular segment spans residues 372 to 373 (PG).

The protein belongs to the insect chemoreceptor superfamily. Gustatory receptor (GR) family. Gr10a subfamily.

It localises to the cell membrane. Its function is as follows. Probable gustatory receptor which mediates acceptance or avoidance behavior, depending on its substrates. This Drosophila melanogaster (Fruit fly) protein is Putative gustatory receptor 10b (Gr10b).